A 71-amino-acid chain; its full sequence is uncharacterized protein (71 aa).

Residues 1–10 (MHRKKRKKEK) are compositionally biased toward basic residues. The interval 1–20 (MHRKKRKKEKKRTEKDNTTN) is disordered. A helical transmembrane segment spans residues 21–43 (LPPLFLFPCSLSLPTLLAPVHYI).

It localises to the membrane. This is an uncharacterized protein from Saccharomyces cerevisiae (strain ATCC 204508 / S288c) (Baker's yeast).